The primary structure comprises 236 residues: 1-(5-phosphoribosyl)-5-[(5-phosphoribosylamino)methylideneamino] imidazole-4-carboxamide isomerase (236 aa).

The Proton acceptor role is filled by aspartate 8. Catalysis depends on aspartate 129, which acts as the Proton donor.

Belongs to the HisA/HisF family.

It localises to the cytoplasm. The catalysed reaction is 1-(5-phospho-beta-D-ribosyl)-5-[(5-phospho-beta-D-ribosylamino)methylideneamino]imidazole-4-carboxamide = 5-[(5-phospho-1-deoxy-D-ribulos-1-ylimino)methylamino]-1-(5-phospho-beta-D-ribosyl)imidazole-4-carboxamide. It functions in the pathway amino-acid biosynthesis; L-histidine biosynthesis; L-histidine from 5-phospho-alpha-D-ribose 1-diphosphate: step 4/9. This chain is 1-(5-phosphoribosyl)-5-[(5-phosphoribosylamino)methylideneamino] imidazole-4-carboxamide isomerase, found in Ruminiclostridium cellulolyticum (strain ATCC 35319 / DSM 5812 / JCM 6584 / H10) (Clostridium cellulolyticum).